The chain runs to 505 residues: Cyclic AMP-dependent transcription factor ATF-2 (505 aa).

Positions 1 to 7 (MKFKLHV) match the Nuclear export signal 1 (N-NES) motif. A C2H2-type zinc finger spans residues 25–49 (FLCTAPGCGQRFTNEDHLAVHKHKH). The residue at position 52 (Thr52) is a Phosphothreonine; by PKC/PRKCH. At Ser62 the chain carries Phosphoserine; by VRK1. At Thr69 the chain carries Phosphothreonine; by MAPK11 and MAPK14. Residue Thr71 is modified to Phosphothreonine; by MAPK1, MAPK3, MAPK11, MAPK12, MAPK14 and PLK3. Position 73 is a phosphothreonine; by VRK1 (Thr73). Ser90 and Ser112 each carry phosphoserine. Thr116 is modified (phosphothreonine). Ser121 carries the post-translational modification Phosphoserine; by PKC/PRKCA and PKC/PRKCB. 2 disordered regions span residues 125 to 155 (EPSV…PLAQ) and 259 to 373 (PGIP…RQKR). The residue at position 136 (Ser136) is a Phosphoserine. The span at 282-293 (LTQQHPPVTNGD) shows a compositional bias: polar residues. Residues 296–299 (KGHG) form an essential for its histone acetyltransferase activity region. The segment covering 318–334 (PATSTTETPASPAHTTP) has biased composition (low complexity). Residue Ser328 is modified to Phosphoserine. Ser340 carries the post-translational modification Phosphoserine; by PKC/PRKCA and PKC/PRKCB. Positions 346-363 (AANEDPDEKRRKFLERNR) are enriched in basic and acidic residues. The region spanning 352–415 (DEKRRKFLER…AQLKQLLLAH (64 aa)) is the bZIP domain. Residues 354 to 374 (KRRKFLERNRAAASRCRQKRK) form a basic motif region. Residue Lys357 is modified to N6-acetyllysine. Ser367 is subject to Phosphoserine; by PKC/PRKCA and PKC/PRKCB. At Lys374 the chain carries N6-acetyllysine. A leucine-zipper region spans residues 380-408 (LEKKAEDLSSLNGQLQSEVTLLRNEVAQL). Positions 405–414 (VAQLKQLLLA) match the Nuclear export signal 2 (C-NES) motif. The disordered stretch occupies residues 425–472 (KKSGYHTADKDDSSEDISVPSSPHTEAIQHSSVSTSNGVSSTSKAEAV). A phosphoserine mark is found at Ser442 and Ser446. A compositionally biased stretch (polar residues) spans 443-454 (VPSSPHTEAIQH). The span at 455–467 (SSVSTSNGVSSTS) shows a compositional bias: low complexity. Phosphoserine; by ATM occurs at positions 490 and 498.

This sequence belongs to the bZIP family. ATF subfamily. As to quaternary structure, binds DNA as a dimer and can form a homodimer in the absence of DNA. Can form a heterodimer with JUN. Heterodimerization is essential for its transcriptional activity. Interacts with SMAD3 and SMAD4. Binds through its N-terminal region to UTF1 which acts as a coactivator of ATF2 transcriptional activity. Interacts with the HK1/VDAC1 complex. Interacts with NBN, MRE11, XPO1, KAT5 and CUL3. Phosphorylation of Thr-69 by MAPK14 and MAPK11, and at Thr-71 by MAPK1/ERK2, MAPK3/ERK1, MAPK11, MAPK12 and MAPK14 in response to external stimulus like insulin causes increased transcriptional activity. Phosphorylated by PLK3 following hyperosmotic stress. Also phosphorylated and activated by JNK and CaMK4. ATM-mediated phosphorylation at Ser-490 and Ser-498 stimulates its function in DNA damage response. Phosphorylation at Ser-62, Thr-73 and Ser-121 activates its transcriptional activity. Phosphorylation at Thr-69 or Thr-71 enhances acetylation of histones H2B and H4. As to expression, ubiquitously expressed, with more abundant expression in the brain.

The protein localises to the nucleus. The protein resides in the cytoplasm. Its subcellular location is the mitochondrion outer membrane. Its function is as follows. Transcriptional activator which regulates the transcription of various genes, including those involved in anti-apoptosis, cell growth, and DNA damage response. Dependent on its binding partner, binds to CRE (cAMP response element) consensus sequences (5'-TGACGTCA-3') or to AP-1 (activator protein 1) consensus sequences (5'-TGACTCA-3'). In the nucleus, contributes to global transcription and the DNA damage response, in addition to specific transcriptional activities that are related to cell development, proliferation and death. In the cytoplasm, interacts with and perturbs HK1- and VDAC1-containing complexes at the mitochondrial outer membrane, thereby impairing mitochondrial membrane potential, inducing mitochondrial leakage and promoting cell death. The phosphorylated form (mediated by ATM) plays a role in the DNA damage response and is involved in the ionizing radiation (IR)-induced S phase checkpoint control and in the recruitment of the MRN complex into the IR-induced foci (IRIF). Exhibits histone acetyltransferase (HAT) activity which specifically acetylates histones H2B and H4 in vitro. In concert with CUL3 and RBX1, promotes the degradation of KAT5 thereby attenuating its ability to acetylate and activate ATM. Can elicit oncogenic or tumor suppressor activities depending on the tissue or cell type. The chain is Cyclic AMP-dependent transcription factor ATF-2 (ATF2) from Homo sapiens (Human).